Consider the following 239-residue polypeptide: 6-phosphogluconolactonase (239 aa).

Belongs to the glucosamine/galactosamine-6-phosphate isomerase family. 6-phosphogluconolactonase subfamily.

It catalyses the reaction 6-phospho-D-glucono-1,5-lactone + H2O = 6-phospho-D-gluconate + H(+). It participates in carbohydrate degradation; pentose phosphate pathway; D-ribulose 5-phosphate from D-glucose 6-phosphate (oxidative stage): step 2/3. Functionally, hydrolysis of 6-phosphogluconolactone to 6-phosphogluconate. The sequence is that of 6-phosphogluconolactonase (pgl) from Xylella fastidiosa (strain Temecula1 / ATCC 700964).